Reading from the N-terminus, the 569-residue chain is Pyruvate decarboxylase (569 aa).

Positions 38 and 124 each coordinate pyruvate. Thiamine diphosphate contacts are provided by residues Thr398 and 421-423; that span reads GSI. Asp451 is a binding site for Mg(2+). Residues 452 to 453 and 478 to 483 each bind thiamine diphosphate; these read GS and NEGYTI. Mg(2+)-binding residues include Asn478 and Gly480. Glu484 contacts pyruvate.

It belongs to the TPP enzyme family. As to quaternary structure, homotetramer. The cofactor is Mg(2+). It depends on thiamine diphosphate as a cofactor.

The enzyme catalyses a 2-oxocarboxylate + H(+) = an aldehyde + CO2. It carries out the reaction pyruvate + H(+) = acetaldehyde + CO2. This Aspergillus fumigatus (strain ATCC MYA-4609 / CBS 101355 / FGSC A1100 / Af293) (Neosartorya fumigata) protein is Pyruvate decarboxylase (pdcA).